The chain runs to 502 residues: Glycerol kinase (502 aa).

Threonine 14 serves as a coordination point for ADP. 3 residues coordinate ATP: threonine 14, threonine 15, and serine 16. Threonine 14 is a sn-glycerol 3-phosphate binding site. An ADP-binding site is contributed by arginine 18. Arginine 84, glutamate 85, tyrosine 136, and aspartate 246 together coordinate sn-glycerol 3-phosphate. Glycerol contacts are provided by arginine 84, glutamate 85, tyrosine 136, aspartate 246, and glutamine 247. ADP contacts are provided by threonine 268 and glycine 311. Residues threonine 268, glycine 311, glutamine 315, and glycine 412 each contribute to the ATP site. ADP is bound by residues glycine 412 and asparagine 416.

Belongs to the FGGY kinase family. In terms of assembly, homotetramer and homodimer (in equilibrium). Heterodimer with EIIA-Glc. Binds 1 zinc ion per glycerol kinase EIIA-Glc dimer. The zinc ion is important for dimerization.

It catalyses the reaction glycerol + ATP = sn-glycerol 3-phosphate + ADP + H(+). Its pathway is polyol metabolism; glycerol degradation via glycerol kinase pathway; sn-glycerol 3-phosphate from glycerol: step 1/1. With respect to regulation, activity of this regulatory enzyme is affected by several metabolites. Allosterically and non-competitively inhibited by fructose 1,6-bisphosphate (FBP) and unphosphorylated phosphocarrier protein EIIA-Glc (III-Glc), an integral component of the bacterial phosphotransferase (PTS) system. Its function is as follows. Key enzyme in the regulation of glycerol uptake and metabolism. Catalyzes the phosphorylation of glycerol to yield sn-glycerol 3-phosphate. The protein is Glycerol kinase of Escherichia coli O7:K1 (strain IAI39 / ExPEC).